A 332-amino-acid chain; its full sequence is Tumor necrosis factor receptor superfamily member 6 (332 aa).

An N-terminal signal peptide occupies residues 1-16; sequence MSGIWVLLSLVFTCIA. The Extracellular portion of the chain corresponds to 17–175; it reads GPLSKGDDAQ…VFQSAGSRSN (159 aa). Residue asparagine 38 is glycosylated (N-linked (GlcNAc...) asparagine). 3 TNFR-Cys repeats span residues 45-81, 82-125, and 126-164; these read ECPE…PQCV, PCSE…NTKC, and RCKP…TKCR. 9 disulfide bridges follow: cysteine 46-cysteine 57, cysteine 58-cysteine 71, cysteine 61-cysteine 80, cysteine 83-cysteine 99, cysteine 102-cysteine 117, cysteine 105-cysteine 125, cysteine 127-cysteine 141, cysteine 144-cysteine 155, and cysteine 147-cysteine 163. The N-linked (GlcNAc...) asparagine glycan is linked to asparagine 116. The chain crosses the membrane as a helical span at residues 176–192; the sequence is LHWLWALLILIPVPALV. Residues 193–332 are Cytoplasmic-facing; it reads YREVKRRCRR…NSQNENESLT (140 aa). Cysteine 200 carries the S-palmitoyl cysteine lipid modification. An interaction with HIPK3 region spans residues 210–314; it reads PITSNAEEVP…DKINDIVQKD (105 aa). At threonine 212 the chain carries Phosphothreonine. Residues 227 to 251 are interaction with CALM; sequence GKYITRIAEQMKITEVKDFVRKNGI. The region spanning 227 to 311 is the Death domain; the sequence is GKYITRIAEQ…ALADKINDIV (85 aa).

In terms of assembly, component of the death-induced signaling complex (DISC) composed of cell surface receptor FAS/CD95, adapter protein FADD and the CASP8 protease; recruitment of CASP8 to the complex is required for processing of CASP8 into the p18 and p10 subunits. Interacts directly (via DED domain) with NOL3 (via CARD domain); inhibits death-inducing signaling complex (DISC) assembly by inhibiting the increase in FAS-FADD binding induced by FAS activation. Binds DAXX. Interacts with HIPK3. Part of a complex containing HIPK3 and FADD. Binds RIPK1 and FAIM2. Interacts with BABAM2 and FEM1B. Interacts with CALM. In the absence of stimulation, interacts with BIRC2, DDX3X and GSK3B. The interaction with BIRC2 and DDX3X is further enhanced upon receptor stimulation and accompanied by DDX3X and BIRC2 cleavage. Post-translationally, palmitoylated. Palmitoylation by ZDHHC7 prevents the lysosomal degradation of FAS regulating its expression at the plasma membrane.

Its subcellular location is the cell membrane. The protein localises to the membrane raft. Receptor for TNFSF6/FASLG. The adapter molecule FADD recruits caspase CASP8 to the activated receptor. The resulting death-inducing signaling complex (DISC) performs CASP8 proteolytic activation which initiates the subsequent cascade of caspases (aspartate-specific cysteine proteases) mediating apoptosis. FAS-mediated apoptosis may have a role in the induction of peripheral tolerance, in the antigen-stimulated suicide of mature T-cells, or both. The chain is Tumor necrosis factor receptor superfamily member 6 (FAS) from Sus scrofa (Pig).